A 446-amino-acid polypeptide reads, in one-letter code: Cytochrome P450 monooxygenase ATR14 (446 aa).

The segment at 403 to 446 (NFTYPDEFRPDRWLDDRDQKEYEHDHGDAMQPFSVGPRDCPSQK) is disordered. Basic and acidic residues predominate over residues 408 to 430 (DEFRPDRWLDDRDQKEYEHDHGD). Position 442 (C442) interacts with heme.

The protein belongs to the cytochrome P450 family. Heme serves as cofactor.

It functions in the pathway mycotoxin biosynthesis. In terms of biological role, cytochrome P450 monooxygenase; part of the core atranone cluster (CAC) which products are predicted to catalyze most or all steps of mycotoxin atranone synthesis, starting from geranylgeranyl pyrophosphate (GGPP). The initial cyclization of GGPP to dolabellane is probably performed by the terpene cyclase ATR13. The Baeyer-Villiger oxidation near the end of the atranone synthesis, which converts atranones D and E to atranones F and G is predicted to be catalyzed by the monooxygenase ATR8. Of the CAC's other predicted gene products, the reducing PKS ATR6 might synthesize a polyketide chain. This polyketide is probably transferred onto the atranone backbone by the polyketide transferase ATR5. Other predicted CAC products include 4 oxygenases (ATR2, ATR3, ATR4, and ATR14), 3 short-chain reductases (ATR7, ATR9, and ATR10), and a methyltransferase (ATR12). These may all be involved in the various steps of atranone biosynthesis, although their specific roles must await experimental determination. The sequence is that of Cytochrome P450 monooxygenase ATR14 from Stachybotrys chlorohalonatus (strain IBT 40285).